The chain runs to 54 residues: MHVISDECVKCGACASTCPTGAIEEGETKYVVTDSCIDCGACEAVCPTGAISAE.

2 consecutive 4Fe-4S ferredoxin-type domains span residues 2–28 and 29–54; these read HVIS…EGET and KYVV…ISAE. Residues C8, C11, C14, C18, C36, C39, C42, and C46 each contribute to the [4Fe-4S] cluster site.

[4Fe-4S] cluster serves as cofactor.

Ferredoxins are iron-sulfur proteins that transfer electrons in a wide variety of metabolic reactions. This chain is Ferredoxin, found in Megasphaera elsdenii.